The following is a 251-amino-acid chain: DNA repair protein RecO (251 aa).

Belongs to the RecO family.

Its function is as follows. Involved in DNA repair and RecF pathway recombination. This chain is DNA repair protein RecO, found in Acidiphilium cryptum (strain JF-5).